Reading from the N-terminus, the 109-residue chain is Period circadian protein (109 aa).

Composition is skewed to polar residues over residues 42-56 and 68-80; these read QSYS…NLSP and SSRN…NLNM. The segment at 42–109 is disordered; sequence QSYSTPANTG…LVTLTESLLK (68 aa). A compositionally biased stretch (low complexity) spans 81 to 97; it reads GSVTNTSNTGTGTSSGS.

As to quaternary structure, forms a heterodimer with timeless (TIM); the complex then translocates into the nucleus. Post-translationally, phosphorylated with a circadian rhythmicity, probably by the double-time protein (dbt). Phosphorylation could be implicated in the stability of per monomer and in the formation of heterodimer per-tim.

The protein resides in the nucleus. The protein localises to the cytoplasm. It is found in the perinuclear region. Essential for biological clock functions. Determines the period length of circadian and ultradian rhythms; an increase in PER dosage leads to shortened circadian rhythms and a decrease leads to lengthened circadian rhythms. Essential for the circadian rhythmicity of locomotor activity, eclosion behavior, and for the rhythmic component of the male courtship song that originates in the thoracic nervous system. The biological cycle depends on the rhythmic formation and nuclear localization of the TIM-PER complex. Light induces the degradation of TIM, which promotes elimination of PER. Nuclear activity of the heterodimer coordinatively regulates PER and TIM transcription through a negative feedback loop. Behaves as a negative element in circadian transcriptional loop. Does not appear to bind DNA, suggesting indirect transcriptional inhibition. The sequence is that of Period circadian protein (per) from Musca domestica (House fly).